The following is a 581-amino-acid chain: Leucine-rich repeat-containing protein 47 (581 aa).

LRR repeat units lie at residues 78 to 97 (QLHS…SPEL), 102 to 123 (ALRV…EGLG), 132 to 154 (QLQS…ARCA), 156 to 177 (RLQS…LFRP), 182 to 204 (LLSE…AHLA), 205 to 227 (SLKT…ADCP), and 228 to 248 (KLKE…EKMV). The segment at 262–301 (AGGRGGRSKGRQEASEKEDRKKRRERKQHRESGEGEEEVA) is disordered. The segment covering 271 to 280 (GRQEASEKED) has biased composition (basic and acidic residues). Phosphoserine is present on residues S314, S430, and S519. Positions 401-436 (LGRKEAKAKELVRQLQLEAEEQRKQKKRQSVSGLHR) form a coiled coil.

The chain is Leucine-rich repeat-containing protein 47 (Lrrc47) from Mus musculus (Mouse).